The chain runs to 191 residues: Fe/S biogenesis protein NfuA (191 aa).

Residues C149 and C152 each coordinate [4Fe-4S] cluster.

It belongs to the NfuA family. In terms of assembly, homodimer. [4Fe-4S] cluster serves as cofactor.

In terms of biological role, involved in iron-sulfur cluster biogenesis. Binds a 4Fe-4S cluster, can transfer this cluster to apoproteins, and thereby intervenes in the maturation of Fe/S proteins. Could also act as a scaffold/chaperone for damaged Fe/S proteins. The polypeptide is Fe/S biogenesis protein NfuA (Yersinia pseudotuberculosis serotype O:1b (strain IP 31758)).